A 65-amino-acid chain; its full sequence is Large ribosomal subunit protein bL35 (65 aa).

Disordered stretches follow at residues 1 to 23 (MPKLKTKSGAAKRFKKTGKGGFK) and 36 to 65 (MTTKRKRHLRGMNQVAKVDTTSLVQQMPYA). Positions 54 to 65 (DTTSLVQQMPYA) are enriched in polar residues.

The protein belongs to the bacterial ribosomal protein bL35 family.

This chain is Large ribosomal subunit protein bL35, found in Francisella tularensis subsp. tularensis (strain FSC 198).